A 394-amino-acid polypeptide reads, in one-letter code: Elongation factor Tu (394 aa).

The tr-type G domain occupies 10–204 (KPHVNIGTIG…AVDSYIPQPV (195 aa)). Residues 19 to 26 (GHVDHGKT) are G1. 19–26 (GHVDHGKT) provides a ligand contact to GTP. Residue threonine 26 participates in Mg(2+) binding. Residues 60-64 (GITIS) are G2. Positions 81–84 (DCPG) are G3. Residues 81–85 (DCPGH) and 136–139 (NKVD) each bind GTP. Positions 136–139 (NKVD) are G4. The G5 stretch occupies residues 174-176 (SAL).

It belongs to the TRAFAC class translation factor GTPase superfamily. Classic translation factor GTPase family. EF-Tu/EF-1A subfamily. As to quaternary structure, monomer.

The protein localises to the cytoplasm. It carries out the reaction GTP + H2O = GDP + phosphate + H(+). In terms of biological role, GTP hydrolase that promotes the GTP-dependent binding of aminoacyl-tRNA to the A-site of ribosomes during protein biosynthesis. This Rickettsia massiliae (strain Mtu5) protein is Elongation factor Tu.